Consider the following 259-residue polypeptide: Ribonuclease PH (259 aa).

Phosphate contacts are provided by residues Arg-88 and 126-128 (GTR).

Belongs to the RNase PH family. Homohexameric ring arranged as a trimer of dimers.

The catalysed reaction is tRNA(n+1) + phosphate = tRNA(n) + a ribonucleoside 5'-diphosphate. Its function is as follows. Phosphorolytic 3'-5' exoribonuclease that plays an important role in tRNA 3'-end maturation. Removes nucleotide residues following the 3'-CCA terminus of tRNAs; can also add nucleotides to the ends of RNA molecules by using nucleoside diphosphates as substrates, but this may not be physiologically important. Probably plays a role in initiation of 16S rRNA degradation (leading to ribosome degradation) during starvation. This chain is Ribonuclease PH, found in Mycolicibacterium smegmatis (strain ATCC 700084 / mc(2)155) (Mycobacterium smegmatis).